The chain runs to 223 residues: Noggin (223 aa).

Positions 1–26 (MDHSQCLVTIYAAAVLLGLRLQQGSC) are cleaved as a signal peptide. An N-linked (GlcNAc...) asparagine glycan is attached at Asn-61. 4 disulfides stabilise this stretch: Cys-146-Cys-183, Cys-169-Cys-219, Cys-175-Cys-221, and Cys-198-Cys-206.

This sequence belongs to the noggin family. In terms of assembly, homodimer.

It is found in the secreted. Functionally, inhibitor of bone morphogenetic proteins (BMP) signaling. Controls somitogenesis by sequestering the BMP-4 activity which in turn differentiates distinct subtypes of the mesoderm along the mediolateral axis. The polypeptide is Noggin (NOG) (Gallus gallus (Chicken)).